A 305-amino-acid chain; its full sequence is tRNA dimethylallyltransferase (305 aa).

Residue 14–21 coordinates ATP; the sequence is GPTTSGKT. 16 to 21 contacts substrate; the sequence is TTSGKT. Interaction with substrate tRNA regions lie at residues 39 to 42, 163 to 167, and 243 to 248; these read DSAL, QRITR, and RCVGYR.

The protein belongs to the IPP transferase family. Monomer. Mg(2+) is required as a cofactor.

The catalysed reaction is adenosine(37) in tRNA + dimethylallyl diphosphate = N(6)-dimethylallyladenosine(37) in tRNA + diphosphate. Its function is as follows. Catalyzes the transfer of a dimethylallyl group onto the adenine at position 37 in tRNAs that read codons beginning with uridine, leading to the formation of N6-(dimethylallyl)adenosine (i(6)A). The polypeptide is tRNA dimethylallyltransferase (Ruthia magnifica subsp. Calyptogena magnifica).